The chain runs to 810 residues: MFYSHCLVSRKGPLGAIWVAAYFFKKLKKSQVKATHIPSSVDQILQKELDALTYRVLAYLLLGVVRIYSKKVDFLFDDCNKALIGVKEFVAKERNREKTGVSLPASIECFSIALPERFELDAFDLGVLEDFHGGNVKPHEDITLKDGSQETERMDMYSMERFDMEEDLLFTFHETFSTNHNENKHESFAHDMELDAENVRDTTEEASVRVVEAEPLDSNEPSRDHQNASRHREDPESDDILLEPQMSEDIRIAQEEDTVRETICTIVQRLVDSHESSGDNLHRDGHTENLESEKTSKKTSCEEMQHDRSLPSECGIPEAIHGIEDQPSGATRINGEKEIPEMSTLEKPEPVSVTGSRDLQEGVEKCRDHNEAEMADFELFHGSHKEQSETSEVNLHGSEKGFLSDMTVSKDPSSEFNATDTPVTVTPKTPSRLKISEGGTSPQFSIIPTPAAKESSRVSRKRKCLIDDEVIIPNKVMKEMIEDSSKLLAKRRNVPHTDCPERRTKRFANPFRSFLEPLIQYGSSDLQSLFCQPIKLKNWATTGTPKDTKIARHKEKSSLDTVRSPGVILSSDQTENTQEIMETPQAAALAGLKVTAGNSNVVSVEMGASSTTSGTAHQTENAAETPVKPSVIAPETPVRTSEQTVIAPETPVVSEQVEIAPETPVRESMSKRFFKDPGTCYKKSRPASPFTSFEEHPSVYYVENRDLDTILMNDEQVNADERQDLQQETWSSRTRNVAKFLEKTFLEQREREEEEKVSLLQLCRGRTQKESARLFYETLVLKTKGYVEVKQNHPYSDVFLMRVSRPQKAC.

3 disordered regions span residues 200–244 (RDTT…LLEP), 273–315 (SHES…SECG), and 606–626 (MGAS…AETP). 2 stretches are compositionally biased toward basic and acidic residues: residues 220 to 234 (EPSR…HRED) and 273 to 310 (SHES…DRSL). Residues 606–622 (MGASSTTSGTAHQTENA) show a composition bias toward polar residues.

This sequence belongs to the rad21 family. Component of the cohesin complex. Low expression in shoots, buds, siliques, leaves and roots. Found in, but not limited to, actively dividing cells: in procambium, protoderm and ground meristem in roots, and in shoot and floral meristems.

It is found in the nucleus. May be involved in sister chromatid cohesion during mitosis. This chain is Sister chromatid cohesion 1 protein 2 (SYN2), found in Arabidopsis thaliana (Mouse-ear cress).